Consider the following 125-residue polypeptide: Phosphoribosyl-AMP cyclohydrolase (125 aa).

Asp-74 is a Mg(2+) binding site. A Zn(2+)-binding site is contributed by Cys-75. Mg(2+)-binding residues include Asp-76 and Asp-78. Cys-92 and Cys-99 together coordinate Zn(2+).

It belongs to the PRA-CH family. Homodimer. It depends on Mg(2+) as a cofactor. The cofactor is Zn(2+).

It localises to the cytoplasm. It catalyses the reaction 1-(5-phospho-beta-D-ribosyl)-5'-AMP + H2O = 1-(5-phospho-beta-D-ribosyl)-5-[(5-phospho-beta-D-ribosylamino)methylideneamino]imidazole-4-carboxamide. It participates in amino-acid biosynthesis; L-histidine biosynthesis; L-histidine from 5-phospho-alpha-D-ribose 1-diphosphate: step 3/9. In terms of biological role, catalyzes the hydrolysis of the adenine ring of phosphoribosyl-AMP. In Geotalea uraniireducens (strain Rf4) (Geobacter uraniireducens), this protein is Phosphoribosyl-AMP cyclohydrolase.